The following is a 671-amino-acid chain: DNA ligase (671 aa).

NAD(+) is bound by residues 32-36 (DAEYD), 81-82 (SL), and Glu113. Lys115 acts as the N6-AMP-lysine intermediate in catalysis. Residues Arg136, Glu173, Lys290, and Lys314 each coordinate NAD(+). Positions 408, 411, 426, and 432 each coordinate Zn(2+). The 79-residue stretch at 593–671 (EIDSPFAGKT…EAEMLRLLGS (79 aa)) folds into the BRCT domain.

This sequence belongs to the NAD-dependent DNA ligase family. LigA subfamily. It depends on Mg(2+) as a cofactor. Mn(2+) is required as a cofactor.

It carries out the reaction NAD(+) + (deoxyribonucleotide)n-3'-hydroxyl + 5'-phospho-(deoxyribonucleotide)m = (deoxyribonucleotide)n+m + AMP + beta-nicotinamide D-nucleotide.. Its function is as follows. DNA ligase that catalyzes the formation of phosphodiester linkages between 5'-phosphoryl and 3'-hydroxyl groups in double-stranded DNA using NAD as a coenzyme and as the energy source for the reaction. It is essential for DNA replication and repair of damaged DNA. This is DNA ligase from Escherichia coli O7:K1 (strain IAI39 / ExPEC).